Reading from the N-terminus, the 135-residue chain is Rheacalcin-1 (135 aa).

3 disulfides stabilise this stretch: C6–C17, C34–C131, and C106–C123. The 120-residue stretch at 13–132 (FRGNCYGYFR…CSERNAFICK (120 aa)) folds into the C-type lectin domain.

The protein resides in the secreted. The protein localises to the extracellular space. It is found in the extracellular matrix. In Rhea americana (Greater rhea), this protein is Rheacalcin-1.